The following is a 151-amino-acid chain: 6,7-dimethyl-8-ribityllumazine synthase (151 aa).

5-amino-6-(D-ribitylamino)uracil-binding positions include F15, 49 to 51, and 73 to 75; these read AVE and AVI. (2S)-2-hydroxy-3-oxobutyl phosphate is bound at residue 78-79; sequence ET. H81 serves as the catalytic Proton donor. F106 is a 5-amino-6-(D-ribitylamino)uracil binding site. R120 contributes to the (2S)-2-hydroxy-3-oxobutyl phosphate binding site.

This sequence belongs to the DMRL synthase family. As to quaternary structure, forms an icosahedral capsid composed of 60 subunits, arranged as a dodecamer of pentamers.

The enzyme catalyses (2S)-2-hydroxy-3-oxobutyl phosphate + 5-amino-6-(D-ribitylamino)uracil = 6,7-dimethyl-8-(1-D-ribityl)lumazine + phosphate + 2 H2O + H(+). It participates in cofactor biosynthesis; riboflavin biosynthesis; riboflavin from 2-hydroxy-3-oxobutyl phosphate and 5-amino-6-(D-ribitylamino)uracil: step 1/2. Catalyzes the formation of 6,7-dimethyl-8-ribityllumazine by condensation of 5-amino-6-(D-ribitylamino)uracil with 3,4-dihydroxy-2-butanone 4-phosphate. This is the penultimate step in the biosynthesis of riboflavin. This Coxiella burnetii (strain CbuG_Q212) (Coxiella burnetii (strain Q212)) protein is 6,7-dimethyl-8-ribityllumazine synthase.